The sequence spans 304 residues: MQKFDTKTFQGLILTLQDYWARQGCTIVQPLDMEVGAGTSHPMTCLRALGPEPMATAYVQPSRRPTDGRYGENPNRLQHYYQFQVVIKPSPDNIQELYLGSLKELGLDPTIHDIRFVEDNWENPTLGAWGLGWEVWLNGMEVTQFTYFQQVGGMECKPVTGEITYGLERLAMYIQGVDSVYDLVWSDGPLGVTTYGDVFHQNEVEQSTYNFEYADVDFLFSCFEQYEKEAQSLLALEKPLPLPAYERILKAGHTFNLLDARKAISVTERQRYILRIRTLTKAVAEAYYASREALGFPMCKKNKS.

Belongs to the class-II aminoacyl-tRNA synthetase family. As to quaternary structure, tetramer of two alpha and two beta subunits.

It localises to the cytoplasm. It catalyses the reaction tRNA(Gly) + glycine + ATP = glycyl-tRNA(Gly) + AMP + diphosphate. In Serratia proteamaculans (strain 568), this protein is Glycine--tRNA ligase alpha subunit.